A 178-amino-acid polypeptide reads, in one-letter code: Ribosome maturation factor RimP (178 aa).

It belongs to the RimP family.

The protein resides in the cytoplasm. Its function is as follows. Required for maturation of 30S ribosomal subunits. The protein is Ribosome maturation factor RimP of Maricaulis maris (strain MCS10) (Caulobacter maris).